Reading from the N-terminus, the 243-residue chain is Probable transcriptional regulatory protein BH0025 (243 aa).

Belongs to the TACO1 family.

It localises to the cytoplasm. This chain is Probable transcriptional regulatory protein BH0025, found in Borrelia hermsii (strain HS1 / DAH).